We begin with the raw amino-acid sequence, 55 residues long: Trypsin inhibitor (55 aa).

In terms of domain architecture, Kazal-like spans 1–55 (AHMDCTEFNPLCRCNKMLGDLICAVIGDAKEEHRNMCALCCEHPGGFEYSNGPCE). Disulfide bonds link C5–C40, C12–C41, C14–C37, and C23–C54.

It localises to the secreted. In terms of biological role, potent inhibitor of trypsin. The sequence is that of Trypsin inhibitor from Halocynthia roretzi (Sea squirt).